Consider the following 723-residue polypeptide: Transmembrane channel-like protein 7 (723 aa).

Disordered regions lie at residues M1–D28 and R51–D71. The Extracellular portion of the chain corresponds to M1–R168. The N-linked (GlcNAc...) asparagine glycan is linked to N24. N-linked (GlcNAc...) asparagine glycosylation occurs at N84. Phosphoserine is present on S89. N-linked (GlcNAc...) asparagine glycosylation is present at N96. A helical membrane pass occupies residues F169–V189. Residues L190–S219 lie on the Cytoplasmic side of the membrane. The chain crosses the membrane as a helical span at residues S220–L240. The Extracellular portion of the chain corresponds to E241–D263. N259 is a glycosylation site (N-linked (GlcNAc...) asparagine). A helical membrane pass occupies residues L264–V284. The Cytoplasmic segment spans residues K285–R362. Residues L363–A383 form a helical membrane-spanning segment. The Extracellular portion of the chain corresponds to T384 to L404. A helical transmembrane segment spans residues F405–F425. At A426–E494 the chain is on the cytoplasmic side. A helical membrane pass occupies residues M495–F515. Topologically, residues P516–W555 are extracellular. Residues I556 to F576 form a helical membrane-spanning segment. Over Y577–F601 the chain is Cytoplasmic. A helical transmembrane segment spans residues F602–I622. Residues S623 to E665 are Extracellular-facing. N-linked (GlcNAc...) asparagine glycosylation is present at N638. Residues A666 to A686 form a helical membrane-spanning segment. At G687 to N723 the chain is on the cytoplasmic side.

This sequence belongs to the TMC family. Interacts with PIEZO2; the interaction inhibits PIEZO2-conducted mechanically activated currents.

It is found in the membrane. Acts as an inhibitory modulator of PIEZO2 mechanosensitive channel in dorsal root ganglion (DRG) neurons through physical interactions or interference with the interaction between PIEZO2 and the cytoskeleton. This Homo sapiens (Human) protein is Transmembrane channel-like protein 7.